A 240-amino-acid chain; its full sequence is Small ribosomal subunit protein uS3 (240 aa).

The 69-residue stretch at 39–107 folds into the KH type-2 domain; it reads IRDFIKKEAK…ELHLNIVEVR (69 aa). Basic and acidic residues-rich tracts occupy residues 212–221 and 231–240; these read PQARDRRATE and PRRDRDRDAR. The segment at 212 to 240 is disordered; that stretch reads PQARDRRATEAQDGPSPRGPRRDRDRDAR.

It belongs to the universal ribosomal protein uS3 family. Part of the 30S ribosomal subunit. Forms a tight complex with proteins S10 and S14.

Its function is as follows. Binds the lower part of the 30S subunit head. Binds mRNA in the 70S ribosome, positioning it for translation. The chain is Small ribosomal subunit protein uS3 from Paracoccus denitrificans (strain Pd 1222).